The sequence spans 223 residues: uncharacterized protein (223 aa).

The N-terminal 12 residues, 1 to 12 (MFRSLVRKTTPL), are a transit peptide targeting the mitochondrion.

The protein localises to the mitochondrion. This is an uncharacterized protein from Candida albicans (strain WO-1) (Yeast).